The following is a 403-amino-acid chain: Phosphopentomutase (403 aa).

Residues D13, D298, H303, D339, H340, and H351 each contribute to the Mn(2+) site.

It belongs to the phosphopentomutase family. The cofactor is Mn(2+).

The protein resides in the cytoplasm. It carries out the reaction 2-deoxy-alpha-D-ribose 1-phosphate = 2-deoxy-D-ribose 5-phosphate. It catalyses the reaction alpha-D-ribose 1-phosphate = D-ribose 5-phosphate. It functions in the pathway carbohydrate degradation; 2-deoxy-D-ribose 1-phosphate degradation; D-glyceraldehyde 3-phosphate and acetaldehyde from 2-deoxy-alpha-D-ribose 1-phosphate: step 1/2. Isomerase that catalyzes the conversion of deoxy-ribose 1-phosphate (dRib-1-P) and ribose 1-phosphate (Rib-1-P) to deoxy-ribose 5-phosphate (dRib-5-P) and ribose 5-phosphate (Rib-5-P), respectively. The polypeptide is Phosphopentomutase (Streptococcus thermophilus (strain ATCC BAA-250 / LMG 18311)).